The chain runs to 300 residues: Tyrosine recombinase XerC (300 aa).

Residues 2 to 87 (TSLSPLLEKF…SIKSFYKYLV (86 aa)) form the Core-binding (CB) domain. In terms of domain architecture, Tyr recombinase spans 108 to 294 (TLPKVLPVEE…TWEQLQQVYD (187 aa)). Active-site residues include arginine 148, lysine 172, histidine 246, arginine 249, and histidine 272. Residue tyrosine 281 is the O-(3'-phospho-DNA)-tyrosine intermediate of the active site.

It belongs to the 'phage' integrase family. XerC subfamily. In terms of assembly, forms a cyclic heterotetrameric complex composed of two molecules of XerC and two molecules of XerD.

The protein resides in the cytoplasm. Its function is as follows. Site-specific tyrosine recombinase, which acts by catalyzing the cutting and rejoining of the recombining DNA molecules. The XerC-XerD complex is essential to convert dimers of the bacterial chromosome into monomers to permit their segregation at cell division. It also contributes to the segregational stability of plasmids. This chain is Tyrosine recombinase XerC, found in Myxococcus xanthus.